The chain runs to 635 residues: ATP-dependent zinc metalloprotease FtsH (635 aa).

Over 1 to 6 (MNNQGR) the chain is Cytoplasmic. A helical membrane pass occupies residues 7 to 27 (SILTWAALFVFVILLFNVFQS). Over 28 to 103 (DGLLGGRNNI…VVPLETRMNT (76 aa)) the chain is Periplasmic. Residues 104 to 124 (FLGFLISWFPMLLLIGVWVFF) form a helical membrane-spanning segment. Over 125–635 (MRQMHGGGKA…KKAKKESTNI (511 aa)) the chain is Cytoplasmic. 195 to 202 (GPPGTGKT) serves as a coordination point for ATP. H417 contributes to the Zn(2+) binding site. E418 is a catalytic residue. Residues H421 and D495 each coordinate Zn(2+). The disordered stretch occupies residues 600–635 (SEEENKFPFNDSPTIKIDKEKSPEKAKKAKKESTNI). Positions 615 to 635 (KIDKEKSPEKAKKAKKESTNI) are enriched in basic and acidic residues.

This sequence in the central section; belongs to the AAA ATPase family. The protein in the C-terminal section; belongs to the peptidase M41 family. In terms of assembly, homohexamer. Zn(2+) is required as a cofactor.

It localises to the cell inner membrane. In terms of biological role, acts as a processive, ATP-dependent zinc metallopeptidase for both cytoplasmic and membrane proteins. Plays a role in the quality control of integral membrane proteins. The protein is ATP-dependent zinc metalloprotease FtsH of Rickettsia felis (strain ATCC VR-1525 / URRWXCal2) (Rickettsia azadi).